Consider the following 199-residue polypeptide: Fe/S biogenesis protein NfuA (199 aa).

[4Fe-4S] cluster is bound by residues cysteine 151 and cysteine 154.

It belongs to the NfuA family. As to quaternary structure, homodimer. [4Fe-4S] cluster is required as a cofactor.

In terms of biological role, involved in iron-sulfur cluster biogenesis. Binds a 4Fe-4S cluster, can transfer this cluster to apoproteins, and thereby intervenes in the maturation of Fe/S proteins. Could also act as a scaffold/chaperone for damaged Fe/S proteins. The sequence is that of Fe/S biogenesis protein NfuA from Xylella fastidiosa (strain 9a5c).